Reading from the N-terminus, the 203-residue chain is Glycerol-3-phosphate acyltransferase (203 aa).

5 consecutive transmembrane segments (helical) span residues 4-24 (IAPG…AILV), 56-76 (VAVL…AYML), 80-100 (PFWL…PVFF), 112-132 (FGAI…TWLL), and 138-158 (GYSS…VWWF).

It belongs to the PlsY family. As to quaternary structure, probably interacts with PlsX.

The protein localises to the cell inner membrane. It carries out the reaction an acyl phosphate + sn-glycerol 3-phosphate = a 1-acyl-sn-glycero-3-phosphate + phosphate. Its pathway is lipid metabolism; phospholipid metabolism. Functionally, catalyzes the transfer of an acyl group from acyl-phosphate (acyl-PO(4)) to glycerol-3-phosphate (G3P) to form lysophosphatidic acid (LPA). This enzyme utilizes acyl-phosphate as fatty acyl donor, but not acyl-CoA or acyl-ACP. This Enterobacter sp. (strain 638) protein is Glycerol-3-phosphate acyltransferase.